The following is a 332-amino-acid chain: 2,3-diketo-L-gulonate reductase (332 aa).

The Proton donor role is filled by histidine 44. Residues 168–174 (ITMVDMS), 224–225 (WK), and 304–306 (GHE) contribute to the NAD(+) site.

Belongs to the LDH2/MDH2 oxidoreductase family. DlgD subfamily. Homodimer.

It is found in the cytoplasm. The catalysed reaction is 3-dehydro-L-gulonate + NAD(+) = 2,3-dioxo-L-gulonate + NADH + H(+). It catalyses the reaction 3-dehydro-L-gulonate + NADP(+) = 2,3-dioxo-L-gulonate + NADPH + H(+). Catalyzes the reduction of 2,3-diketo-L-gulonate in the presence of NADH, to form 3-keto-L-gulonate. This Klebsiella pneumoniae (strain 342) protein is 2,3-diketo-L-gulonate reductase.